Here is a 452-residue protein sequence, read N- to C-terminus: Acetyl-CoA decarbonylase/synthase complex subunit delta (452 aa).

The protein belongs to the CdhD family. As to quaternary structure, heterodimer of delta and gamma chains. The ACDS complex is made up of alpha, epsilon, beta, gamma and delta chains with a probable stoichiometry of (alpha(2)epsilon(2))(4)-beta(8)-(gamma(1)delta(1))(8).

Part of a complex that catalyzes the reversible cleavage of acetyl-CoA, allowing autotrophic growth from CO(2). Probably maintains the overall quaternary structure of the ACDS complex. The chain is Acetyl-CoA decarbonylase/synthase complex subunit delta from Archaeoglobus fulgidus (strain ATCC 49558 / DSM 4304 / JCM 9628 / NBRC 100126 / VC-16).